The sequence spans 145 residues: Large ribosomal subunit protein uL11 (145 aa).

This sequence belongs to the universal ribosomal protein uL11 family. In terms of assembly, part of the ribosomal stalk of the 50S ribosomal subunit. Interacts with L10 and the large rRNA to form the base of the stalk. L10 forms an elongated spine to which L12 dimers bind in a sequential fashion forming a multimeric L10(L12)X complex. In terms of processing, one or more lysine residues are methylated.

In terms of biological role, forms part of the ribosomal stalk which helps the ribosome interact with GTP-bound translation factors. This chain is Large ribosomal subunit protein uL11, found in Flavobacterium johnsoniae (strain ATCC 17061 / DSM 2064 / JCM 8514 / BCRC 14874 / CCUG 350202 / NBRC 14942 / NCIMB 11054 / UW101) (Cytophaga johnsonae).